Consider the following 522-residue polypeptide: 2-isopropylmalate synthase (522 aa).

The 263-residue stretch at 5 to 267 folds into the Pyruvate carboxyltransferase domain; that stretch reads VIIFDTTLRD…DCGINAKEIH (263 aa). 4 residues coordinate Mn(2+): Asp-14, His-202, His-204, and Asn-238. Positions 392–522 are regulatory domain; sequence QLQHMMVHSD…IHKERELGGV (131 aa).

It belongs to the alpha-IPM synthase/homocitrate synthase family. LeuA type 1 subfamily. Homodimer. Mn(2+) serves as cofactor.

It localises to the cytoplasm. The catalysed reaction is 3-methyl-2-oxobutanoate + acetyl-CoA + H2O = (2S)-2-isopropylmalate + CoA + H(+). Its pathway is amino-acid biosynthesis; L-leucine biosynthesis; L-leucine from 3-methyl-2-oxobutanoate: step 1/4. Functionally, catalyzes the condensation of the acetyl group of acetyl-CoA with 3-methyl-2-oxobutanoate (2-ketoisovalerate) to form 3-carboxy-3-hydroxy-4-methylpentanoate (2-isopropylmalate). This is 2-isopropylmalate synthase from Shewanella frigidimarina (strain NCIMB 400).